Reading from the N-terminus, the 499-residue chain is uncharacterized protein (499 aa).

This is an uncharacterized protein from Metamycoplasma hominis (strain ATCC 23114 / DSM 25592 / NBRC 14850 / NCTC 10111 / PG21) (Mycoplasma hominis).